The sequence spans 633 residues: Pentatricopeptide repeat-containing protein At1g43980, mitochondrial (633 aa).

A mitochondrion-targeting transit peptide spans 1 to 30 (MFQLLRRAHGLCMPSSLYFSRLVNRSLLSK). 14 PPR repeats span residues 50 to 80 (TTYW…IPDK), 81 to 111 (NTIT…MPER), 112 to 146 (DVVS…EIRP), 147 to 178 (TEFT…GVSR), 180 to 210 (NLVV…MEDR), 211 to 245 (DVVS…EIQP), 246 to 280 (DEYT…GFLS), 281 to 311 (NSIV…LEKW), 312 to 346 (DSVL…SVRP), 347 to 380 (DKFT…GFDL), 381 to 411 (DTAV…TDGK), 412 to 447 (DLIF…SLKP), 448 to 483 (DRVT…GVNP), and 484 to 514 (GNEH…IPFE). The type E motif stretch occupies residues 519-594 (IWEPILCASL…AQGSSKISIE (76 aa)).

It belongs to the PPR family. PCMP-E subfamily.

Its subcellular location is the mitochondrion. The sequence is that of Pentatricopeptide repeat-containing protein At1g43980, mitochondrial (PCMP-E58) from Arabidopsis thaliana (Mouse-ear cress).